Reading from the N-terminus, the 487-residue chain is Glutamyl-tRNA(Gln) amidotransferase subunit A (487 aa).

Active-site charge relay system residues include Lys77 and Ser152. The active-site Acyl-ester intermediate is Ser176.

The protein belongs to the amidase family. GatA subfamily. In terms of assembly, heterotrimer of A, B and C subunits.

The catalysed reaction is L-glutamyl-tRNA(Gln) + L-glutamine + ATP + H2O = L-glutaminyl-tRNA(Gln) + L-glutamate + ADP + phosphate + H(+). Allows the formation of correctly charged Gln-tRNA(Gln) through the transamidation of misacylated Glu-tRNA(Gln) in organisms which lack glutaminyl-tRNA synthetase. The reaction takes place in the presence of glutamine and ATP through an activated gamma-phospho-Glu-tRNA(Gln). The polypeptide is Glutamyl-tRNA(Gln) amidotransferase subunit A (Limosilactobacillus fermentum (strain NBRC 3956 / LMG 18251) (Lactobacillus fermentum)).